The chain runs to 889 residues: Coatomer subunit gamma-2 (889 aa).

5 HEAT repeats span residues 67–102 (VEATEVFFATTKLFQSKDAGLRRMVYLMIKELSPSA), 103–140 (DEVIIVTSSLMKDMNSKTDMYRANAIRVLCRIIDSTLL), 289–326 (RELTPAITVLQLFLSSSKPVLRFAAVRTLNKVASTHPL), 328–360 (VTNCNIDMESLISDQNRSIATLAITTLLKTGNE), and 361–398 (SSVDRLMKQMTNFMSDIADEFKIVVVEAIRSLCLKFPL). Residues 596–617 (PLAEKKTTGKKPTGPASALSGP) are disordered.

It belongs to the COPG family. As to quaternary structure, oligomeric complex that consists of at least the alpha, beta, beta', gamma, delta, epsilon and zeta subunits.

The protein resides in the cytoplasm. The protein localises to the golgi apparatus membrane. It localises to the cytoplasmic vesicle. It is found in the COPI-coated vesicle membrane. The coatomer is a cytosolic protein complex that binds to dilysine motifs and reversibly associates with Golgi non-clathrin-coated vesicles, which further mediate biosynthetic protein transport from the ER, via the Golgi up to the trans Golgi network. Coatomer complex is required for budding from Golgi membranes, and is essential for the retrograde Golgi-to-ER transport of dilysine-tagged proteins. The polypeptide is Coatomer subunit gamma-2 (Oryza sativa subsp. japonica (Rice)).